The primary structure comprises 313 residues: MTLRILLLLHPTVVSDQNLVESVKSKISAEHPNHSLDQQIINRITQGDVVLSNNTYDEIHYINPNDSQYLEMPILLIKLLNDLLTHDGVLRGDLPKDQNLDALMQGFVVGDDGSWIKPKPVETVLLLKKKKESNITSNSNNNDSSPREVGVNNTGNYTHAAMSTLASKKKIPMFKKLLDRSNEVKGNLASGTVKSPSPGLTDTSAQNTDEENENGNSMKRKLVETKLTYFSDSDSDNNEGRDLDDDDDDGQEDNDIYINENDLISELKSDNLIIPKKCELPQWGKGAERHVRTVRVGLKGVVKEAGAFRRQSG.

Positions 1–184 are N-terminal SAM-like domain; that stretch reads MTLRILLLLH…KKLLDRSNEV (184 aa). Residues 134-144 show a composition bias toward low complexity; the sequence is NITSNSNNNDS. 3 disordered regions span residues 134-155, 187-254, and 271-313; these read NITS…NNTG, NLAS…QEDN, and NLII…RQSG. Residues 185–270 are linker; sequence KGNLASGTVK…NDLISELKSD (86 aa). Positions 189-207 are enriched in polar residues; sequence ASGTVKSPSPGLTDTSAQN. Over residues 233 to 254 the composition is skewed to acidic residues; that stretch reads SDSDNNEGRDLDDDDDDGQEDN.

This sequence belongs to the anamorsin family. As to quaternary structure, monomer. Interacts with TAH18. Interacts with MIA40.

Its subcellular location is the cytoplasm. The protein resides in the mitochondrion intermembrane space. Functionally, component of the cytosolic iron-sulfur (Fe-S) protein assembly (CIA) machinery required for the maturation of extramitochondrial Fe-S proteins. Part of an electron transfer chain functioning in an early step of cytosolic Fe-S biogenesis, facilitating the de novo assembly of a [4Fe-4S] cluster on the scaffold complex CFD1-NBP35. Electrons are transferred to DRE2 from NADPH via the FAD- and FMN-containing protein TAH18. TAH18-DRE2 are also required for the assembly of the diferric tyrosyl radical cofactor of ribonucleotide reductase (RNR), probably by providing electrons for reduction during radical cofactor maturation in the catalytic small subunit RNR2. This Lodderomyces elongisporus (strain ATCC 11503 / CBS 2605 / JCM 1781 / NBRC 1676 / NRRL YB-4239) (Yeast) protein is Fe-S cluster assembly protein DRE2 (DRE2).